The following is a 259-amino-acid chain: Keratinocyte-associated transmembrane protein 2 (259 aa).

Residues 1 to 44 (MAASALGRMCGAAREKLSPGPGARGLGALARSLVLALLLVPVLC) form the signal peptide. Residues 45–190 (SDRSENPPNN…VKLPPPNRED (146 aa)) are Extracellular-facing. The interval 47 to 155 (RSENPPNNAT…YDWTTNPRDE (109 aa)) is disordered. Residues 50–81 (NPPNNATVSSPVVVTAPGNHTSPSVSQISTTL) are compositionally biased toward polar residues. N-linked (GlcNAc...) asparagine glycosylation is found at asparagine 54 and asparagine 68. The segment covering 82–104 (SPASAEKSGSSSAAPTPTAAPSA) has biased composition (low complexity). Acidic residues predominate over residues 105-122 (PEEEADSNEDPSMEEEDL). Serine 165 carries the post-translational modification Phosphoserine. The chain crosses the membrane as a helical span at residues 191–211 (SHFFFHLLIFAFCAAVVYVTY). Residues 212-259 (HNKRKIFLLVQSRKWRDGLCSKTVEYHRLDQNVNEAMPSLKITNDYIF) are Cytoplasmic-facing. Residues serine 223 and serine 250 each carry the phosphoserine modification.

The protein localises to the membrane. The polypeptide is Keratinocyte-associated transmembrane protein 2 (Kct2) (Mus musculus (Mouse)).